Consider the following 177-residue polypeptide: Deoxyuridine 5'-triphosphate nucleotidohydrolase (177 aa).

Residues 83–85 (RSG), Asn96, 100–102 (TID), and Lys110 contribute to the substrate site. The span at 150 to 163 (DLTSSQTDLSNQPN) shows a compositional bias: polar residues. A disordered region spans residues 150–177 (DLTSSQTDLSNQPNTGRGTGGFGSTGQK). The segment covering 166–177 (RGTGGFGSTGQK) has biased composition (gly residues).

This sequence belongs to the dUTPase family. The cofactor is Mg(2+).

The catalysed reaction is dUTP + H2O = dUMP + diphosphate + H(+). Its pathway is pyrimidine metabolism; dUMP biosynthesis; dUMP from dCTP (dUTP route): step 2/2. In terms of biological role, this enzyme is involved in nucleotide metabolism: it produces dUMP, the immediate precursor of thymidine nucleotides and it decreases the intracellular concentration of dUTP so that uracil cannot be incorporated into DNA. The protein is Deoxyuridine 5'-triphosphate nucleotidohydrolase of Bartonella bacilliformis (strain ATCC 35685 / KC583 / Herrer 020/F12,63).